We begin with the raw amino-acid sequence, 346 residues long: Peripherin-2 (346 aa).

At 1-24 the chain is on the cytoplasmic side; that stretch reads MALLKVKFDQKKRVKLAQGLWLMN. Residues 25 to 43 traverse the membrane as a helical segment; sequence WLSVLAGIVIFSLGLFLKI. Over 44 to 61 the chain is Lumenal; sequence ELRKRSDVMNNSESHFVP. N-linked (GlcNAc...) asparagine glycosylation occurs at asparagine 53. The helical transmembrane segment at 62–80 threads the bilayer; the sequence is NSLIGMGVLSCVFNSLAGK. Over 81 to 99 the chain is Cytoplasmic; it reads ICYDALDPSKYAKWKPWLK. A helical transmembrane segment spans residues 100 to 123; that stretch reads SYLVVCVLFNIVLFLVALCCFLMR. Topologically, residues 124 to 264 are lumenal; that stretch reads GSLESTLAQG…LSYYGSLMNS (141 aa). An N-linked (GlcNAc...) asparagine glycan is attached at asparagine 229. The chain crosses the membrane as a helical span at residues 265–290; the sequence is MGAVTLLVWLFEVSITIGLRYLHTAL. The Cytoplasmic segment spans residues 291–346; it reads EGVSNPEDLECESEGWLLEKSVSETWKAFLESLKKLGKSNQVEAEGADAGQAPEAG. Residues 341-346 form an interaction with MREG region; it reads QAPEAG.

Belongs to the PRPH2/ROM1 family. As to quaternary structure, homodimer; disulfide-linked. Forms a homotetramer. Forms a heterotetramer with ROM1. Homotetramer and heterotetramer core complexes go on to form higher order complexes by formation of intermolecular disulfide bonds. Interacts with MREG. Interacts with STX3. Interacts with SNAP25. In terms of tissue distribution, retina (photoreceptor). In rim region of ROS (rod outer segment) disks.

The protein resides in the membrane. Its subcellular location is the cell projection. It localises to the cilium. The protein localises to the photoreceptor outer segment. It is found in the photoreceptor inner segment. Functionally, essential for retina photoreceptor outer segment disk morphogenesis, may also play a role with ROM1 in the maintenance of outer segment disk structure. Required for the maintenance of retinal outer nuclear layer thickness. Required for the correct development and organization of the photoreceptor inner segment. In Felis catus (Cat), this protein is Peripherin-2 (PRPH2).